The primary structure comprises 187 residues: NADH-quinone oxidoreductase subunit B (187 aa).

Positions 66, 67, 131, and 161 each coordinate [4Fe-4S] cluster.

The protein belongs to the complex I 20 kDa subunit family. NDH-1 is composed of 14 different subunits. Subunits NuoB, C, D, E, F, and G constitute the peripheral sector of the complex. It depends on [4Fe-4S] cluster as a cofactor.

The protein resides in the cell inner membrane. The catalysed reaction is a quinone + NADH + 5 H(+)(in) = a quinol + NAD(+) + 4 H(+)(out). In terms of biological role, NDH-1 shuttles electrons from NADH, via FMN and iron-sulfur (Fe-S) centers, to quinones in the respiratory chain. Couples the redox reaction to proton translocation (for every two electrons transferred, four hydrogen ions are translocated across the cytoplasmic membrane), and thus conserves the redox energy in a proton gradient. The protein is NADH-quinone oxidoreductase subunit B of Rhizorhabdus wittichii (strain DSM 6014 / CCUG 31198 / JCM 15750 / NBRC 105917 / EY 4224 / RW1) (Sphingomonas wittichii).